The sequence spans 115 residues: NADH-ubiquinone oxidoreductase chain 3 (115 aa).

The next 3 membrane-spanning stretches (helical) occupy residues 3–23, 56–76, and 84–104; these read LILM…IVAF, FFLV…LLPL, and PTLM…GLIY.

The protein belongs to the complex I subunit 3 family.

It is found in the mitochondrion membrane. The enzyme catalyses a ubiquinone + NADH + 5 H(+)(in) = a ubiquinol + NAD(+) + 4 H(+)(out). Its function is as follows. Core subunit of the mitochondrial membrane respiratory chain NADH dehydrogenase (Complex I) that is believed to belong to the minimal assembly required for catalysis. Complex I functions in the transfer of electrons from NADH to the respiratory chain. The immediate electron acceptor for the enzyme is believed to be ubiquinone. This is NADH-ubiquinone oxidoreductase chain 3 (MT-ND3) from Polypterus ornatipinnis (Ornate bichir).